A 227-amino-acid chain; its full sequence is Glutathione S-transferase U27 (227 aa).

Residues 4–84 (EEVVVLNFWP…YIDEVWKDDK (81 aa)) form the GST N-terminal domain. Glutathione is bound by residues 14 to 15 (SM), 41 to 42 (QK), 55 to 56 (KI), and 68 to 69 (ES). Positions 92–217 (DPYQKSQCRF…LKIFDRVTQI (126 aa)) constitute a GST C-terminal domain.

The protein belongs to the GST superfamily. Tau family.

The protein localises to the cytoplasm. The protein resides in the cytosol. It carries out the reaction RX + glutathione = an S-substituted glutathione + a halide anion + H(+). In terms of biological role, may be involved in the conjugation of reduced glutathione to a wide number of exogenous and endogenous hydrophobic electrophiles and have a detoxification role against certain herbicides. The sequence is that of Glutathione S-transferase U27 (GSTU27) from Arabidopsis thaliana (Mouse-ear cress).